Consider the following 857-residue polypeptide: DNA mismatch repair protein MutS (857 aa).

621-628 (GPNMGGKS) provides a ligand contact to ATP.

The protein belongs to the DNA mismatch repair MutS family.

This protein is involved in the repair of mismatches in DNA. It is possible that it carries out the mismatch recognition step. This protein has a weak ATPase activity. The protein is DNA mismatch repair protein MutS of Francisella tularensis subsp. tularensis (strain SCHU S4 / Schu 4).